The sequence spans 218 residues: Putative receptor like protein 25 (218 aa).

At 1–178 (MIYTKNAYGS…QEDAKVLNWK (178 aa)) the chain is on the extracellular side. 4 LRR repeats span residues 34–58 (LTLY…IGLL), 59–82 (KALI…MANL), 83–106 (IELE…LKTL), and 108–131 (FLGY…QITG). N65 carries N-linked (GlcNAc...) asparagine glycosylation. N113 carries an N-linked (GlcNAc...) asparagine glycan. The chain crosses the membrane as a helical span at residues 179-199 (AVATGYGPGVFFGLAIAQIIA). The Cytoplasmic portion of the chain corresponds to 200 to 218 (SYKPEWLVKIIGPNKRRNH).

This sequence belongs to the RLP family.

The protein resides in the cell membrane. The protein is Putative receptor like protein 25 of Arabidopsis thaliana (Mouse-ear cress).